The chain runs to 533 residues: Apolipoprotein N-acyltransferase (533 aa).

6 consecutive transmembrane segments (helical) span residues alanine 17–phenylalanine 37, tryptophan 74–isoleucine 94, leucine 105–alanine 125, leucine 127–glutamate 147, valine 178–leucine 198, and valine 205–alanine 225. The CN hydrolase domain occupies valine 245–glycine 495. The active-site Proton acceptor is the glutamate 290. Residue lysine 354 is part of the active site. Catalysis depends on cysteine 407, which acts as the Nucleophile. Residues tyrosine 509–isoleucine 529 form a helical membrane-spanning segment.

This sequence belongs to the CN hydrolase family. Apolipoprotein N-acyltransferase subfamily.

It is found in the cell inner membrane. It carries out the reaction N-terminal S-1,2-diacyl-sn-glyceryl-L-cysteinyl-[lipoprotein] + a glycerophospholipid = N-acyl-S-1,2-diacyl-sn-glyceryl-L-cysteinyl-[lipoprotein] + a 2-acyl-sn-glycero-3-phospholipid + H(+). It functions in the pathway protein modification; lipoprotein biosynthesis (N-acyl transfer). Functionally, catalyzes the phospholipid dependent N-acylation of the N-terminal cysteine of apolipoprotein, the last step in lipoprotein maturation. This is Apolipoprotein N-acyltransferase from Rhizobium rhizogenes (strain K84 / ATCC BAA-868) (Agrobacterium radiobacter).